The following is a 248-amino-acid chain: GTP cyclohydrolase 1 type 2 homolog (248 aa).

A divalent metal cation contacts are provided by His64, His65, Asp101, His216, and Glu220.

Belongs to the GTP cyclohydrolase I type 2/NIF3 family. Homohexamer.

The protein is GTP cyclohydrolase 1 type 2 homolog of Borreliella burgdorferi (strain ATCC 35210 / DSM 4680 / CIP 102532 / B31) (Borrelia burgdorferi).